Reading from the N-terminus, the 192-residue chain is Leucyl/phenylalanyl-tRNA--protein transferase (192 aa).

The protein belongs to the L/F-transferase family.

It localises to the cytoplasm. It catalyses the reaction N-terminal L-lysyl-[protein] + L-leucyl-tRNA(Leu) = N-terminal L-leucyl-L-lysyl-[protein] + tRNA(Leu) + H(+). The catalysed reaction is N-terminal L-arginyl-[protein] + L-leucyl-tRNA(Leu) = N-terminal L-leucyl-L-arginyl-[protein] + tRNA(Leu) + H(+). The enzyme catalyses L-phenylalanyl-tRNA(Phe) + an N-terminal L-alpha-aminoacyl-[protein] = an N-terminal L-phenylalanyl-L-alpha-aminoacyl-[protein] + tRNA(Phe). Its function is as follows. Functions in the N-end rule pathway of protein degradation where it conjugates Leu, Phe and, less efficiently, Met from aminoacyl-tRNAs to the N-termini of proteins containing an N-terminal arginine or lysine. This chain is Leucyl/phenylalanyl-tRNA--protein transferase, found in Synechococcus sp. (strain JA-3-3Ab) (Cyanobacteria bacterium Yellowstone A-Prime).